Consider the following 633-residue polypeptide: RpoH suppressor (633 aa).

The PNPLA domain occupies Leu11 to Asp410. The next 3 helical transmembrane spans lie at Asn38–Gly58, Ile133–Gly153, and Ile159–Leu179. The GXSXG signature appears at Gly41–Gly45. Catalysis depends on Ser43, which acts as the Nucleophile. Positions Ala342–Gly380 are disordered. Residues Gly352–Glu365 are compositionally biased toward acidic residues. Residue Asp397 is the Proton acceptor of the active site. The DGA/G motif lies at Asp397 to Gly399. The tract at residues Glu605–Leu624 is disordered.

It localises to the cell membrane. In terms of biological role, this protein is non-essential for R.meliloti growth, but induces a heat-shock response in temperature-sensitive E.coli K165 by elevating levels of sigma 32 (mechanism unknown). The sequence is that of RpoH suppressor (suhR) from Rhizobium meliloti (strain 1021) (Ensifer meliloti).